The sequence spans 345 residues: Ferrochelatase (345 aa).

Fe cation-binding residues include His-215 and Glu-296.

Belongs to the ferrochelatase family.

Its subcellular location is the cytoplasm. The catalysed reaction is heme b + 2 H(+) = protoporphyrin IX + Fe(2+). The protein operates within porphyrin-containing compound metabolism; protoheme biosynthesis; protoheme from protoporphyrin-IX: step 1/1. Its function is as follows. Catalyzes the ferrous insertion into protoporphyrin IX. The polypeptide is Ferrochelatase (Rhodopseudomonas palustris (strain BisB5)).